Here is a 254-residue protein sequence, read N- to C-terminus: Type III pantothenate kinase (254 aa).

Val22–Arg29 contacts ATP. Residues Tyr89 and Gly93–Arg96 contribute to the substrate site. Asp95 acts as the Proton acceptor in catalysis. Asp115 is a K(+) binding site. Thr118 contributes to the ATP binding site. A substrate-binding site is contributed by Thr173.

This sequence belongs to the type III pantothenate kinase family. As to quaternary structure, homodimer. It depends on NH4(+) as a cofactor. K(+) is required as a cofactor.

Its subcellular location is the cytoplasm. The catalysed reaction is (R)-pantothenate + ATP = (R)-4'-phosphopantothenate + ADP + H(+). It participates in cofactor biosynthesis; coenzyme A biosynthesis; CoA from (R)-pantothenate: step 1/5. In terms of biological role, catalyzes the phosphorylation of pantothenate (Pan), the first step in CoA biosynthesis. The protein is Type III pantothenate kinase of Synechococcus sp. (strain JA-2-3B'a(2-13)) (Cyanobacteria bacterium Yellowstone B-Prime).